The primary structure comprises 265 residues: Di-trans,poly-cis-undecaprenyl-diphosphate synthase (265 aa).

The short motif at 236–238 is the RXG motif; crucial for prenyltransferase activity element; sequence RFG.

Belongs to the UPP synthase family. The cofactor is Mg(2+).

The catalysed reaction is 8 isopentenyl diphosphate + (2E,6E)-farnesyl diphosphate = di-trans,octa-cis-undecaprenyl diphosphate + 8 diphosphate. It participates in protein modification; protein glycosylation. It functions in the pathway lipid metabolism. Its function is as follows. Cis-prenyl transferase involved in the synthesis of dolichol, a long-chain polyprenol that is utilized as a sugar carrier in protein glycosylation in the endoplasmic reticulum (ER). Catalyzes the sequential condensation of isopentenyl pyrophosphate (IPP) with farnesyl pyrophosphate (FPP) to produce a polyprenyl pyrophosphate which contains 11 (major) and 12 (minor) isoprene units. In Giardia intestinalis (strain ATCC 50803 / WB clone C6) (Giardia lamblia), this protein is Di-trans,poly-cis-undecaprenyl-diphosphate synthase.